The primary structure comprises 536 residues: MALTSFLPAPTQLSQDQLEAEEKARSQRSRQTSLVSSRREPPPYGYRKGWIPRLLEDFGDGGAFPEIHVAQYPLDMGRKKKMSNALAIQVDSEGKIKYDAIARQGQSKDKVIYSKYTDLVPKEVMNADDPDLQRPDEEAIKEITEKTRVALEKSVSQKVAAAMPVRAADKLAPAQYIRYTPSQQGVAFNSGAKQRVIRMVEMQKDPMEPPRFKINKKIPRGPPSPPAPVMHSPSRKVTVKEQQEWKIPPCISNWKNAKGYTIPLDKRLAADGRGLQTVHINENFAKLAEALYIADRKAREAVEMRAQVERKMAQKEKEKHEEKLREMAQKARERRAGIKTHVEKEDGEARERDEIRHDRRKERQHDRNLSRAAPDKRSKLQRNENRDISEVIALGVPNPRTSNEVQYDQRLFNQSKGMDSGFAGGEDEIYNVYDQAWRGGKDMAQSIYRPSKNLDKDMYGDDLEARIKTNRFVPDKEFSGSDRRQRGREGPVQFEEDPFGLDKFLEEAKQHGGSKRPSDSSRPKEHEHEGKKRRKE.

The segment at 1-46 (MALTSFLPAPTQLSQDQLEAEEKARSQRSRQTSLVSSRREPPPYGY) is disordered. The residue at position 2 (alanine 2) is an N-acetylalanine. A Phosphoserine modification is found at serine 14. A Glycyl lysine isopeptide (Lys-Gly) (interchain with G-Cter in SUMO2) cross-link involves residue lysine 23. The segment at 59–79 (GDGGAFPEIHVAQYPLDMGRK) is interaction with PPIL1. Glycyl lysine isopeptide (Lys-Gly) (interchain with G-Cter in SUMO2) cross-links involve residues lysine 81, lysine 97, lysine 115, lysine 122, lysine 141, lysine 158, and lysine 170. The interval 174 to 339 (AQYIRYTPSQ…KARERRAGIK (166 aa)) is SNW. Phosphoserine occurs at positions 182 and 190. Residue lysine 193 forms a Glycyl lysine isopeptide (Lys-Gly) (interchain with G-Cter in SUMO2) linkage. Residues 209–234 (PPRFKINKKIPRGPPSPPAPVMHSPS) are disordered. A phosphoserine mark is found at serine 224, serine 232, and serine 234. Residues lysine 240, lysine 258, lysine 286, lysine 339, lysine 344, lysine 416, and lysine 441 each participate in a glycyl lysine isopeptide (Lys-Gly) (interchain with G-Cter in SUMO2) cross-link. The tract at residues 311 to 386 (KMAQKEKEKH…RSKLQRNENR (76 aa)) is disordered. A Phosphoserine modification is found at serine 446. A Glycyl lysine isopeptide (Lys-Gly) (interchain with G-Cter in SUMO2) cross-link involves residue lysine 452. Composition is skewed to basic and acidic residues over residues 469–489 (TNRF…RGRE) and 503–530 (KFLE…EHEG). Positions 469-536 (TNRFVPDKEF…EHEGKKRRKE (68 aa)) are disordered. 2 positions are modified to phosphoserine: serine 479 and serine 481. Residue lysine 509 forms a Glycyl lysine isopeptide (Lys-Gly) (interchain with G-Cter in SUMO2) linkage.

The protein belongs to the SNW family. Identified in the spliceosome C complex. Associates with U4/U6-U5 tri-small nuclear ribonucleoproteins (U4/U6-U5 tri-snRNPs). Component of the minor spliceosome, which splices U12-type introns. Interacts with SKI, SMAD2,SMAD3, RBPJ, RB1, PABPN1, MAGEA1, SIRT1, FOXN3, U2AF2, PPIL1, DAXX and ATP1B4. Interacts with VDR and RXRA; preferentially associates with VDR:RXRA heterodimers. Interacts with NCOR2. Interacts with MAML1. Interacts with NOTCH1 NICD; the interaction involves multimerized NOTCH1 NICD. Forms a complex with NOTCH1 NICD and MAML1; the association is dissociated by RBPJ. Associates with positive transcription elongation factor b (P-TEFb). Component of the SNARP complex which consists at least of SNIP1, SNW1, THRAP3, BCLAF1 and PNN.

It localises to the nucleus. Functionally, involved in pre-mRNA splicing as component of the spliceosome. As a component of the minor spliceosome, involved in the splicing of U12-type introns in pre-mRNAs. Required in the specific splicing of CDKN1A pre-mRNA; the function probably involves the recruitment of U2AF2 to the mRNA. May recruit PPIL1 to the spliceosome. May be involved in cyclin-D1/CCND1 mRNA stability through the SNARP complex which associates with both the 3'end of the CCND1 gene and its mRNA. Involved in transcriptional regulation. Modulates TGF-beta-mediated transcription via association with SMAD proteins, MYOD1-mediated transcription via association with PABPN1, RB1-mediated transcriptional repression, and retinoid-X receptor (RXR)- and vitamin D receptor (VDR)-dependent gene transcription in a cell line-specific manner probably involving coactivators NCOA1 and GRIP1. Is involved in NOTCH1-mediated transcriptional activation. Binds to multimerized forms of Notch intracellular domain (NICD) and is proposed to recruit transcriptional coactivators such as MAML1 to form an intermediate preactivation complex which associates with DNA-bound CBF-1/RBPJ to form a transcriptional activation complex by releasing SNW1 and redundant NOTCH1 NICD. The polypeptide is SNW domain-containing protein 1 (SNW1) (Pongo abelii (Sumatran orangutan)).